A 243-amino-acid chain; its full sequence is Protein VERNALIZATION 1 (243 aa).

An MADS-box domain is found at 1-61 (MGRGKVQLKR…GKLYEFATDS (61 aa)). A K-box domain is found at 88–178 (QGNWCHEYRK…QKELVEKQKA (91 aa)). Positions 122–178 (LKELQQLEQQLESSLKHIRSRKNQLMHESISELQRKERSLQEENKALQKELVEKQKA) form a coiled coil. The disordered stretch occupies residues 173–243 (VEKQKAHTQQ…PPWMVSHISG (71 aa)). Over residues 179–192 (HTQQAQWEQTHPQT) the composition is skewed to polar residues.

The protein localises to the nucleus. Component of a grass-specific mechanism of vernalization, a process by which prolonged cold exposure provides competence to flower in daylengths longer than 12 hours. Involved in the exit of vernalization and confers flowering competency at the expense of freezing tolerance, probably by promoting the expression of VRN3; this process is essential in cv. Bd29-1 for flowering but seems do not occur in cv. Bd21. This chain is Protein VERNALIZATION 1, found in Brachypodium distachyon (Purple false brome).